We begin with the raw amino-acid sequence, 1663 residues long: Kotanin synthase (1663 aa).

An N-terminal acylcarrier protein transacylase domain (SAT) region spans residues 19 to 168; that stretch reads RPHEFSFNTQ…PLPVYGGPCH (150 aa). The 431-residue stretch at 301-731 folds into the Ketosynthase family 3 (KS3) domain; it reads DSRIAVVGMS…GGNTSLLLEE (431 aa). Active-site for beta-ketoacyl synthase activity residues include Cys-474, His-609, and His-650. Residues 830–1149 form a malonyl-CoA:ACP transacylase (MAT) domain region; it reads FIFSGQGSFY…SMCTLQETGV (320 aa). Residues 1209–1527 form a product template (PT) domain region; it reads TALVHQIMEE…PRILMNRFFD (319 aa). Residues 1213-1349 form an N-terminal hotdog fold region; sequence HQIMEESFRP…GVVRCGDRQS (137 aa). Residues 1213–1523 form the PKS/mFAS DH domain; it reads HQIMEESFRP…LRPLPRILMN (311 aa). His-1245 (proton acceptor; for dehydratase activity) is an active-site residue. The C-terminal hotdog fold stretch occupies residues 1376–1523; it reads QASRVSRDLV…LRPLPRILMN (148 aa). Asp-1434 acts as the Proton donor; for dehydratase activity in catalysis. The segment at 1544–1580 is disordered; sequence DLPQVQHQPSPTTDSGPDDDPKDPNTGPLTPEVDLPV. Positions 1586-1663 constitute a Carrier domain; it reads KANTKLVRGA…ELKEYLTASW (78 aa). At Ser-1623 the chain carries O-(pantetheine 4'-phosphoryl)serine.

The cofactor is pantetheine 4'-phosphate.

It participates in secondary metabolite biosynthesis. In terms of biological role, non-reducing polyketide synthase; part of the gene cluster that mediates the biosynthesis of the bicoumarin kotanin. The non-reducing polyketide synthase ktnS first catalyzes the formation of the pentaketidic 4,7-dihydroxy-5-methylcoumarin from acetyl coenzyme A and 4 malonyl coenzyme A molecules. Further O-methylation by ktnB leads to the formation of 7-demethylsiderin. Then, an oxidative phenol coupling catalyzed by the cytochrome P450 monooxygenase ktnC forms the 8,8'-dimer P-orlandin via dimerization the monomeric precursor, 7-demethylsiderin. P-orlandin is subsequently O-methylated in a stepwise fashion to demethylkotanin and kotanin. In Aspergillus niger (strain ATCC MYA-4892 / CBS 513.88 / FGSC A1513), this protein is Kotanin synthase.